The following is a 493-amino-acid chain: Tripartite motif-containing protein 5 (493 aa).

Ala2 carries the N-acetylalanine modification. An RING-type zinc finger spans residues 15–59; sequence CPICLELLTQPLSLDCGHSFCQACLTANHKKSMLDKGESSCPVCR. Residue Ser86 is modified to Phosphoserine. The segment at 90 to 132 adopts a B box-type zinc-finger fold; the sequence is QKVDHCARHGEKLLLFCQEDGKVICWLCERSQEHRGHHTFLTE. Positions 95, 98, 117, and 123 each coordinate Zn(2+). Residues 130–241 are a coiled coil; the sequence is LTEEVAREYQ…ISDLEHRLQG (112 aa). The required for interaction with GABARAP and for autophagy stretch occupies residues 185–198; that stretch reads FEQLRDILDWEESN. Positions 281-493 constitute a B30.2/SPRY domain; that stretch reads LKGMLEVFRE…VPMTLCSPSS (213 aa).

Belongs to the TRIM/RBCC family. Can form homodimers and homotrimers. In addition to lower-order dimerization, also exhibits a higher-order multimerization and both low- and high-order multimerizations are essential for its restriction activity. Isoform Delta interacts with BTBD1 and BTBD2. Interacts with PSMC4, PSMC5, PSMD7 and HSPA8/HSC70. Interacts (via B30.2/SPRY domain) with HSPA1A/B. Interacts with PSMC2, MAP3K7/TAK1, TAB2 and TAB3. Interacts with SQSTM1. Interacts with TRIM6 and TRIM34. Interacts with ULK1 (phosphorylated form), GABARAP, GABARAPL1, GABARAPL2, MAP1LC3A, MAP1LC3C and BECN1. Degraded in a proteasome-independent fashion in the absence of viral infection but in a proteasome-dependent fashion following exposure to restriction sensitive virus. Post-translationally, autoubiquitinated in a RING finger- and UBE2D2-dependent manner. Monoubiquitinated by TRIM21. Deubiquitinated by Yersinia YopJ. Ubiquitination may not lead to proteasomal degradation.

Its subcellular location is the cytoplasm. The protein resides in the nucleus. It carries out the reaction S-ubiquitinyl-[E2 ubiquitin-conjugating enzyme]-L-cysteine + [acceptor protein]-L-lysine = [E2 ubiquitin-conjugating enzyme]-L-cysteine + N(6)-ubiquitinyl-[acceptor protein]-L-lysine.. It functions in the pathway protein modification; protein ubiquitination. Capsid-specific restriction factor that prevents infection from non-host-adapted retroviruses. Blocks viral replication early in the life cycle, after viral entry but before reverse transcription. In addition to acting as a capsid-specific restriction factor, also acts as a pattern recognition receptor that activates innate immune signaling in response to the retroviral capsid lattice. Binding to the viral capsid triggers its E3 ubiquitin ligase activity, and in concert with the heterodimeric ubiquitin conjugating enzyme complex UBE2V1-UBE2N (also known as UBC13-UEV1A complex) generates 'Lys-63'-linked polyubiquitin chains, which in turn are catalysts in the autophosphorylation of the MAP3K7/TAK1 complex (includes TAK1, TAB2, and TAB3). Activation of the MAP3K7/TAK1 complex by autophosphorylation results in the induction and expression of NF-kappa-B and MAPK-responsive inflammatory genes, thereby leading to an innate immune response in the infected cell. Restricts infection by N-tropic murine leukemia virus (N-MLV), equine infectious anemia virus (EIAV), simian immunodeficiency virus of macaques (SIVmac), feline immunodeficiency virus (FIV), and bovine immunodeficiency virus (BIV). Plays a role in regulating autophagy through activation of autophagy regulator BECN1 by causing its dissociation from its inhibitors BCL2 and TAB2. Also plays a role in autophagy by acting as a selective autophagy receptor which recognizes and targets HIV-1 capsid protein p24 for autophagic destruction. The polypeptide is Tripartite motif-containing protein 5 (TRIM5) (Homo sapiens (Human)).